A 405-amino-acid polypeptide reads, in one-letter code: Probable tRNA sulfurtransferase (405 aa).

One can recognise a THUMP domain in the interval 60–165 (DQVMARLSQV…REAIYLSTKT (106 aa)). ATP is bound by residues 183–184 (ML), 208–209 (HF), R265, G287, and Q296.

This sequence belongs to the ThiI family.

The protein localises to the cytoplasm. The enzyme catalyses [ThiI sulfur-carrier protein]-S-sulfanyl-L-cysteine + a uridine in tRNA + 2 reduced [2Fe-2S]-[ferredoxin] + ATP + H(+) = [ThiI sulfur-carrier protein]-L-cysteine + a 4-thiouridine in tRNA + 2 oxidized [2Fe-2S]-[ferredoxin] + AMP + diphosphate. It carries out the reaction [ThiS sulfur-carrier protein]-C-terminal Gly-Gly-AMP + S-sulfanyl-L-cysteinyl-[cysteine desulfurase] + AH2 = [ThiS sulfur-carrier protein]-C-terminal-Gly-aminoethanethioate + L-cysteinyl-[cysteine desulfurase] + A + AMP + 2 H(+). It participates in cofactor biosynthesis; thiamine diphosphate biosynthesis. In terms of biological role, catalyzes the ATP-dependent transfer of a sulfur to tRNA to produce 4-thiouridine in position 8 of tRNAs, which functions as a near-UV photosensor. Also catalyzes the transfer of sulfur to the sulfur carrier protein ThiS, forming ThiS-thiocarboxylate. This is a step in the synthesis of thiazole, in the thiamine biosynthesis pathway. The sulfur is donated as persulfide by IscS. The polypeptide is Probable tRNA sulfurtransferase (Lacticaseibacillus paracasei (strain ATCC 334 / BCRC 17002 / CCUG 31169 / CIP 107868 / KCTC 3260 / NRRL B-441) (Lactobacillus paracasei)).